The primary structure comprises 339 residues: Glycerol-3-phosphate dehydrogenase [NAD(P)+] (339 aa).

NADPH is bound by residues serine 15, tyrosine 16, histidine 36, and lysine 110. Residues lysine 110, glycine 139, and threonine 141 each contribute to the sn-glycerol 3-phosphate site. Alanine 143 serves as a coordination point for NADPH. 5 residues coordinate sn-glycerol 3-phosphate: lysine 195, aspartate 248, serine 258, arginine 259, and asparagine 260. The active-site Proton acceptor is the lysine 195. Arginine 259 provides a ligand contact to NADPH. Residues valine 283 and glutamate 285 each contribute to the NADPH site.

Belongs to the NAD-dependent glycerol-3-phosphate dehydrogenase family.

It is found in the cytoplasm. It catalyses the reaction sn-glycerol 3-phosphate + NAD(+) = dihydroxyacetone phosphate + NADH + H(+). The catalysed reaction is sn-glycerol 3-phosphate + NADP(+) = dihydroxyacetone phosphate + NADPH + H(+). It functions in the pathway membrane lipid metabolism; glycerophospholipid metabolism. Functionally, catalyzes the reduction of the glycolytic intermediate dihydroxyacetone phosphate (DHAP) to sn-glycerol 3-phosphate (G3P), the key precursor for phospholipid synthesis. This Shigella boydii serotype 18 (strain CDC 3083-94 / BS512) protein is Glycerol-3-phosphate dehydrogenase [NAD(P)+].